The sequence spans 338 residues: Calcium uniporter protein 4, mitochondrial (338 aa).

A mitochondrion-targeting transit peptide spans 1 to 36 (MVMMKKLLSNRLFNMSKTASQSLMNCRTSSSSSLAM). Residues 233 to 253 (LWAGLGYLIIQTAGFMRLTFW) traverse the membrane as a helical segment. The short motif at 257 to 265 (WDVMEPICF) is the Selectivity filter element. Glutamate 261 is a binding site for Ca(2+). Residues 263-280 (ICFYVSSVYFMAGYTFFL) traverse the membrane as a helical segment.

The protein belongs to the MCU (TC 1.A.77) family.

Its subcellular location is the mitochondrion inner membrane. It catalyses the reaction Ca(2+)(in) = Ca(2+)(out). Functionally, mitochondrial inner membrane calcium uniporter that mediates calcium uptake into mitochondria. Constitutes a pore-forming and calcium-conducting subunit. Mitochondrial calcium homeostasis plays key roles in cellular physiology and regulates cell bioenergetics, cytoplasmic calcium signals and activation of cell death pathways. In Arabidopsis thaliana (Mouse-ear cress), this protein is Calcium uniporter protein 4, mitochondrial.